Reading from the N-terminus, the 380-residue chain is Alanine racemase (380 aa).

Lysine 39 functions as the Proton acceptor; specific for D-alanine in the catalytic mechanism. Lysine 39 is modified (N6-(pyridoxal phosphate)lysine). A substrate-binding site is contributed by arginine 137. Tyrosine 263 acts as the Proton acceptor; specific for L-alanine in catalysis. Methionine 310 is a substrate binding site.

Belongs to the alanine racemase family. The cofactor is pyridoxal 5'-phosphate.

The catalysed reaction is L-alanine = D-alanine. The protein operates within amino-acid biosynthesis; D-alanine biosynthesis; D-alanine from L-alanine: step 1/1. Catalyzes the interconversion of L-alanine and D-alanine. May also act on other amino acids. This Macrococcus caseolyticus (strain JCSC5402) (Macrococcoides caseolyticum) protein is Alanine racemase (alr).